Consider the following 623-residue polypeptide: MFLEEYDVIVVGAGHAGCEAAAASANLGCSTLLVTMSLQNIAQMSCNPAMGGIAKGQIVREIDALGGYSGIVSDNTAIQFKMLNKSKGPAMWSPRVQSDRMRFAEEWRLMLEGTPNLDFYQEMVSGMVIENNKVLGIKTSLGLTIRGKSVVLTNGTFLNGLIHIGDKQFGGGRAGESAAYGITEDLVKAGFESGRMKTGTPPRVDGRSLDYSKMNVEAGDINPSKFSYSDVTKPLVHQRDCHMTYTSLLVHDILREGFERSPMFNGRIKSLGPRYCPSIEDKINRFADKDRHQLFVEPEGWNTCEVYVNGFSTSLPEDIQFKALRSVVGFEKVKFFRAGYAIEYDYFPPTQLKHTLETKLISGLYFAGQINGTTGYEEAASQGLMAGINAALKVKEKEPLILKRDEAYIGVLIDDLITKGTEEPYRMFTSRAEFRTLLRQDNADFRLTPMSNTLGLASDARLRRMEHKLNESEKMVAFFKETSITPTEANPVLIAKKTAEVNQTDKIFKILSRPQIDLSDVLKFENVANYVANNNVDQEILEQAEIQVKYSGYIDKERANAEKLTRLEDLKIPEKFDYHQIKSMSIEAKQKLSKIRPVTISQASRISGVSPSDISVLLVFLGR.

Residue 12–17 (GAGHAG) participates in FAD binding. Residue 272 to 286 (GPRYCPSIEDKINRF) coordinates NAD(+).

This sequence belongs to the MnmG family. In terms of assembly, homodimer. Heterotetramer of two MnmE and two MnmG subunits. FAD serves as cofactor.

The protein resides in the cytoplasm. NAD-binding protein involved in the addition of a carboxymethylaminomethyl (cmnm) group at the wobble position (U34) of certain tRNAs, forming tRNA-cmnm(5)s(2)U34. The protein is tRNA uridine 5-carboxymethylaminomethyl modification enzyme MnmG of Flavobacterium psychrophilum (strain ATCC 49511 / DSM 21280 / CIP 103535 / JIP02/86).